Reading from the N-terminus, the 208-residue chain is N-(5'-phosphoribosyl)anthranilate isomerase (208 aa).

This sequence belongs to the TrpF family.

The catalysed reaction is N-(5-phospho-beta-D-ribosyl)anthranilate = 1-(2-carboxyphenylamino)-1-deoxy-D-ribulose 5-phosphate. The protein operates within amino-acid biosynthesis; L-tryptophan biosynthesis; L-tryptophan from chorismate: step 3/5. In Chlamydia trachomatis serovar A (strain ATCC VR-571B / DSM 19440 / HAR-13), this protein is N-(5'-phosphoribosyl)anthranilate isomerase.